Here is a 153-residue protein sequence, read N- to C-terminus: UPF0756 membrane protein Lm4b_01579 (153 aa).

Transmembrane regions (helical) follow at residues 6 to 26 (MLFL…SLII), 54 to 74 (WGVT…QIGF), 80 to 100 (SFKS…SILA), and 117 to 137 (LVFG…GPVI).

Belongs to the UPF0756 family.

The protein resides in the cell membrane. This is UPF0756 membrane protein Lm4b_01579 from Listeria monocytogenes serotype 4b (strain CLIP80459).